A 192-amino-acid polypeptide reads, in one-letter code: A-type ATP synthase subunit E (192 aa).

This sequence belongs to the V-ATPase E subunit family. Has multiple subunits with at least A(3), B(3), C, D, E, F, H, I and proteolipid K(x).

It localises to the cell membrane. Functionally, component of the A-type ATP synthase that produces ATP from ADP in the presence of a proton gradient across the membrane. This Sulfolobus acidocaldarius (strain ATCC 33909 / DSM 639 / JCM 8929 / NBRC 15157 / NCIMB 11770) protein is A-type ATP synthase subunit E.